The primary structure comprises 174 residues: Peptidyl-prolyl cis-trans isomerase D, mitochondrial (174 aa).

The PPIase cyclophilin-type domain occupies 10 to 173 (FFQIKQGNTP…AACVIEDCGQ (164 aa)).

The protein belongs to the cyclophilin-type PPIase family. PPIase D subfamily.

The protein localises to the mitochondrion. It catalyses the reaction [protein]-peptidylproline (omega=180) = [protein]-peptidylproline (omega=0). Binds cyclosporin A (CsA). CsA mediates some of its effects via an inhibitory action on PPIase. PPIases accelerate the folding of proteins. It catalyzes the cis-trans isomerization of proline imidic peptide bonds in oligopeptides. The protein is Peptidyl-prolyl cis-trans isomerase D, mitochondrial (cypD) of Dictyostelium discoideum (Social amoeba).